The chain runs to 109 residues: Large ribosomal subunit protein uL22 (109 aa).

This sequence belongs to the universal ribosomal protein uL22 family. Part of the 50S ribosomal subunit.

Functionally, this protein binds specifically to 23S rRNA; its binding is stimulated by other ribosomal proteins, e.g. L4, L17, and L20. It is important during the early stages of 50S assembly. It makes multiple contacts with different domains of the 23S rRNA in the assembled 50S subunit and ribosome. In terms of biological role, the globular domain of the protein is located near the polypeptide exit tunnel on the outside of the subunit, while an extended beta-hairpin is found that lines the wall of the exit tunnel in the center of the 70S ribosome. This is Large ribosomal subunit protein uL22 from Dechloromonas aromatica (strain RCB).